Here is a 282-residue protein sequence, read N- to C-terminus: D-alanine aminotransferase (282 aa).

Residue Tyr-32 participates in substrate binding. Arg-51 provides a ligand contact to pyridoxal 5'-phosphate. Residues Arg-99 and His-101 each contribute to the substrate site. Lys-146 functions as the Proton acceptor in the catalytic mechanism. Lys-146 carries the N6-(pyridoxal phosphate)lysine modification. A pyridoxal 5'-phosphate-binding site is contributed by Glu-178.

Belongs to the class-IV pyridoxal-phosphate-dependent aminotransferase family. As to quaternary structure, homodimer. Pyridoxal 5'-phosphate serves as cofactor.

It carries out the reaction D-alanine + 2-oxoglutarate = D-glutamate + pyruvate. Its function is as follows. Acts on the D-isomers of alanine, leucine, aspartate, glutamate, aminobutyrate, norvaline and asparagine. The enzyme transfers an amino group from a substrate D-amino acid to the pyridoxal phosphate cofactor to form pyridoxamine and an alpha-keto acid in the first half-reaction. The second half-reaction is the reverse of the first, transferring the amino group from the pyridoxamine to a second alpha-keto acid to form the product D-amino acid via a ping-pong mechanism. This is an important process in the formation of D-alanine and D-glutamate, which are essential bacterial cell wall components. The polypeptide is D-alanine aminotransferase (dat) (Staphylococcus aureus (strain MW2)).